Consider the following 360-residue polypeptide: Protein phosphatase methylesterase 1 (360 aa).

The segment at 26 to 50 (DEDDIPEPAVMPPTGNSSSTANTED) is disordered. Catalysis depends on residues serine 167, aspartate 192, and histidine 316.

It belongs to the AB hydrolase superfamily.

The catalysed reaction is [phosphatase 2A protein]-C-terminal L-leucine methyl ester + H2O = [phosphatase 2A protein]-C-terminal L-leucine + methanol + H(+). Demethylates proteins that have been reversibly carboxymethylated. Demethylates the phosphatase PP2A catalytic subunit. Involved in the regulation of filamentous growth. The polypeptide is Protein phosphatase methylesterase 1 (PPE1) (Candida albicans (strain SC5314 / ATCC MYA-2876) (Yeast)).